A 252-amino-acid polypeptide reads, in one-letter code: Pyridoxine 5'-phosphate synthase (252 aa).

Asn-7 provides a ligand contact to 3-amino-2-oxopropyl phosphate. Residue 9–10 participates in 1-deoxy-D-xylulose 5-phosphate binding; the sequence is DH. Arg-18 serves as a coordination point for 3-amino-2-oxopropyl phosphate. The Proton acceptor role is filled by His-43. Positions 45 and 50 each coordinate 1-deoxy-D-xylulose 5-phosphate. Glu-70 acts as the Proton acceptor in catalysis. Residue Thr-100 participates in 1-deoxy-D-xylulose 5-phosphate binding. His-190 (proton donor) is an active-site residue. Residues Gly-191 and 212-213 contribute to the 3-amino-2-oxopropyl phosphate site; that span reads GH.

The protein belongs to the PNP synthase family. In terms of assembly, homooctamer; tetramer of dimers.

The protein localises to the cytoplasm. It carries out the reaction 3-amino-2-oxopropyl phosphate + 1-deoxy-D-xylulose 5-phosphate = pyridoxine 5'-phosphate + phosphate + 2 H2O + H(+). Its pathway is cofactor biosynthesis; pyridoxine 5'-phosphate biosynthesis; pyridoxine 5'-phosphate from D-erythrose 4-phosphate: step 5/5. Catalyzes the complicated ring closure reaction between the two acyclic compounds 1-deoxy-D-xylulose-5-phosphate (DXP) and 3-amino-2-oxopropyl phosphate (1-amino-acetone-3-phosphate or AAP) to form pyridoxine 5'-phosphate (PNP) and inorganic phosphate. This chain is Pyridoxine 5'-phosphate synthase, found in Synechococcus sp. (strain RCC307).